A 1347-amino-acid polypeptide reads, in one-letter code: Protocadherin-11 X-linked (1347 aa).

Residues 1–23 form the signal peptide; the sequence is MDLLSGTYIFAVLLACVVFHSGA. Residues 24–812 lie on the Extracellular side of the membrane; the sequence is QEKNYTIREE…VSSPTNDYVK (789 aa). 7 Cadherin domains span residues 26–139, 140–249, 250–355, 362–466, 467–570, 571–673, and 677–795; these read KNYT…APLF, PATV…HPVF, KETE…VPSI, NPVN…APVF, TQSF…SPVF, THNE…KPVF, and PSNY…APVT. N-linked (GlcNAc...) asparagine glycosylation is found at N27, N48, and N54. The N-linked (GlcNAc...) asparagine glycan is linked to N344. N553 is a glycosylation site (N-linked (GlcNAc...) asparagine). N-linked (GlcNAc...) asparagine glycosylation is present at N773. A helical transmembrane segment spans residues 813 to 833; it reads ILVAAVAGTITVVVVIFITAV. The Cytoplasmic portion of the chain corresponds to 834–1347; the sequence is VRCRQAPHLK…DSPIMEEHPL (514 aa). 3 disordered regions span residues 1057 to 1091, 1097 to 1116, and 1326 to 1347; these read LPEG…GYPQ, RATP…ESTF, and FTPR…EHPL.

It localises to the cell membrane. In terms of biological role, potential calcium-dependent cell-adhesion protein. The sequence is that of Protocadherin-11 X-linked (PCDH11X) from Gorilla gorilla gorilla (Western lowland gorilla).